A 78-amino-acid polypeptide reads, in one-letter code: Acyl carrier protein (78 aa).

The region spanning 2–77 (STIEERVKKI…AAIDFIQANQ (76 aa)) is the Carrier domain. Position 37 is an O-(pantetheine 4'-phosphoryl)serine (serine 37).

The protein belongs to the acyl carrier protein (ACP) family. In terms of processing, 4'-phosphopantetheine is transferred from CoA to a specific serine of apo-ACP by AcpS. This modification is essential for activity because fatty acids are bound in thioester linkage to the sulfhydryl of the prosthetic group.

The protein resides in the cytoplasm. Its pathway is lipid metabolism; fatty acid biosynthesis. Its function is as follows. Carrier of the growing fatty acid chain in fatty acid biosynthesis. The sequence is that of Acyl carrier protein from Pectobacterium atrosepticum (strain SCRI 1043 / ATCC BAA-672) (Erwinia carotovora subsp. atroseptica).